Here is a 231-residue protein sequence, read N- to C-terminus: Proteasome subunit alpha type-2 (231 aa).

It belongs to the peptidase T1A family. The 26S proteasome consists of a 20S proteasome core and two 19S regulatory subunits. The 20S proteasome core is composed of 28 subunits that are arranged in four stacked rings, resulting in a barrel-shaped structure. The two end rings are each formed by seven alpha subunits, and the two central rings are each formed by seven beta subunits. The catalytic chamber with the active sites is on the inside of the barrel.

It localises to the cytoplasm. Its subcellular location is the nucleus. Its function is as follows. The proteasome is a multicatalytic proteinase complex which is characterized by its ability to cleave peptides with Arg, Phe, Tyr, Leu, and Glu adjacent to the leaving group at neutral or slightly basic pH. The proteasome has an ATP-dependent proteolytic activity. This chain is Proteasome subunit alpha type-2, found in Trypanosoma brucei brucei.